Consider the following 375-residue polypeptide: Chaperone protein DnaJ (375 aa).

A J domain is found at 5 to 70; the sequence is DFYEVLGVER…SKRAAYDQYG (66 aa). The segment at 134–212 adopts a CR-type zinc-finger fold; it reads GTTVSIRVPT…CHGEGRVEEY (79 aa). Residues cysteine 147, cysteine 150, cysteine 164, cysteine 167, cysteine 186, cysteine 189, cysteine 200, and cysteine 203 each contribute to the Zn(2+) site. CXXCXGXG motif repeat units follow at residues 147–154, 164–171, 186–193, and 200–207; these read CKPCDGSG, CPTCGGIG, CPRCHGQG, and CNSCHGEG.

This sequence belongs to the DnaJ family. Homodimer. Requires Zn(2+) as cofactor.

Its subcellular location is the cytoplasm. In terms of biological role, participates actively in the response to hyperosmotic and heat shock by preventing the aggregation of stress-denatured proteins and by disaggregating proteins, also in an autonomous, DnaK-independent fashion. Unfolded proteins bind initially to DnaJ; upon interaction with the DnaJ-bound protein, DnaK hydrolyzes its bound ATP, resulting in the formation of a stable complex. GrpE releases ADP from DnaK; ATP binding to DnaK triggers the release of the substrate protein, thus completing the reaction cycle. Several rounds of ATP-dependent interactions between DnaJ, DnaK and GrpE are required for fully efficient folding. Also involved, together with DnaK and GrpE, in the DNA replication of plasmids through activation of initiation proteins. This Pseudomonas entomophila (strain L48) protein is Chaperone protein DnaJ.